The primary structure comprises 305 residues: Diacylglycerol kinase (305 aa).

One can recognise a DAGKc domain in the interval 1 to 132 (MRKRARIIYN…VDIGKMNSRY (132 aa)). Residues 10–14 (NPTSG), T41, 67–73 (GDGTLNE), and T94 each bind ATP. Residues K213, D216, and Y218 each contribute to the Mg(2+) site. E273 serves as the catalytic Proton acceptor.

This sequence belongs to the diacylglycerol/lipid kinase family. As to quaternary structure, homodimer. Mg(2+) serves as cofactor.

It carries out the reaction a 1,2-diacyl-sn-glycerol + ATP = a 1,2-diacyl-sn-glycero-3-phosphate + ADP + H(+). Functionally, catalyzes the phosphorylation of diacylglycerol (DAG) into phosphatidic acid. Is a key enzyme involved in the production of lipoteichoic acid by reintroducing DAG formed from the breakdown of membrane phospholipids into the phosphatidylglycerol biosynthetic pathway. This is Diacylglycerol kinase (dagK) from Staphylococcus saprophyticus subsp. saprophyticus (strain ATCC 15305 / DSM 20229 / NCIMB 8711 / NCTC 7292 / S-41).